Consider the following 241-residue polypeptide: MLSESLTKTKLTDPLILELLQNIREHRSMLEDLKSIKVDPELSNIISNEIGRELYIENEFHKARGFRKLHIEVAEFSKNLKILHCVFFPDPKFDIPIFGMDLVKINDIVSAAIVDLSPASQNQGVKYEKFLSKVDKSSFTSLREIPKWGEIFSENVFFASLKSKSEENDFCKVVDEYLSILIKLSKEAKPEFKEEIIKERKNYQKNYCVQQMKNEKTSMVLLKYFDEKWVNNYIKTVLFDF.

Belongs to the HY2 family.

The enzyme catalyses (2R,3Z)-phycocyanobilin + 4 oxidized [2Fe-2S]-[ferredoxin] = biliverdin IXalpha + 4 reduced [2Fe-2S]-[ferredoxin] + 4 H(+). Its function is as follows. Catalyzes the four-electron reduction of biliverdin IX-alpha (2-electron reduction at both the A and D rings); the reaction proceeds via an isolatable 2-electron intermediate, 181,182-dihydrobiliverdin. This is Phycocyanobilin:ferredoxin oxidoreductase from Prochlorococcus marinus (strain MIT 9312).